Reading from the N-terminus, the 249-residue chain is MPRTLIAGNWKMNGLMANLAEVERVAAEVPASSEGAETLLCLPATLIHAGSAKSEGSGLKIGGETCHANEKGAHTGDLAAEMLKDAGASYVIVGHSERRADHGETDAVVAAQASAALRAGITPIICVGETLDQRDAGEVLTVITTQMAESIPEGAEAAAIVIAYEPVWAIGTGRVATSEQIAEVHTSIRNLLVRRFGDAGRTTRILYGGSMNPGNAAEILAVAEVNGGLIGGASLKAADFLAIYRLAAQ.

9–11 (NWK) is a substrate binding site. The active-site Electrophile is the His-95. Glu-165 acts as the Proton acceptor in catalysis. Residues Gly-171, Ser-210, and 231–232 (GG) each bind substrate.

Belongs to the triosephosphate isomerase family. In terms of assembly, homodimer.

The protein resides in the cytoplasm. The enzyme catalyses D-glyceraldehyde 3-phosphate = dihydroxyacetone phosphate. It participates in carbohydrate biosynthesis; gluconeogenesis. The protein operates within carbohydrate degradation; glycolysis; D-glyceraldehyde 3-phosphate from glycerone phosphate: step 1/1. In terms of biological role, involved in the gluconeogenesis. Catalyzes stereospecifically the conversion of dihydroxyacetone phosphate (DHAP) to D-glyceraldehyde-3-phosphate (G3P). This is Triosephosphate isomerase from Hyphomonas neptunium (strain ATCC 15444).